Here is a 558-residue protein sequence, read N- to C-terminus: Rhamnogalacturonase B (558 aa).

Positions Met-1–Ala-21 are cleaved as a signal peptide. A disulfide bond links Cys-42 and Cys-68. An N-linked (GlcNAc...) asparagine glycan is attached at Asn-145. Asp-219 serves as the catalytic Proton donor. Cysteines 221 and 238 form a disulfide. N-linked (GlcNAc...) asparagine glycans are attached at residues Asn-239 and Asn-254. His-294 is a catalytic residue. A glycan (N-linked (GlcNAc...) asparagine) is linked at Asn-321. 2 disulfides stabilise this stretch: Cys-344–Cys-350 and Cys-372–Cys-381. Residues Val-503–Pro-526 show a composition bias toward low complexity. The tract at residues Val-503–Val-558 is disordered.

It belongs to the glycosyl hydrolase 28 family.

It is found in the secreted. It carries out the reaction Endohydrolysis of alpha-D-GalA-(1-&gt;2)-alpha-L-Rha glycosidic bond in the rhamnogalacturonan I backbone with initial inversion of anomeric configuration releasing oligosaccharides with beta-D-GalA at the reducing end.. In terms of biological role, pectinolytic enzymes consist of four classes of enzymes: pectine lyase, polygalacturonase, pectin methylesterase and rhamnogalacturonase. Hydrolyzes alpha-D-galacturonopyranosyl-(1,2)-alpha-L-rhamnopyranosyl linkages in the backbone of the hairy regions of pectins. The chain is Rhamnogalacturonase B (rhgB) from Aspergillus niger.